Consider the following 602-residue polypeptide: Bifunctional lycopene cyclase/phytoene synthase (602 aa).

Residues 1 to 241 (MYDYAFVHLK…IVGGMAAFDQ (241 aa)) form a lycopene beta-cyclase region. 7 consecutive transmembrane segments (helical) span residues 6 to 26 (FVHL…AYPI), 30 to 50 (IHLI…LPWD), 76 to 96 (FEEL…YILF), 118 to 138 (VVKV…WNAA), 146 to 166 (YLGL…TLAG), 168 to 188 (FILS…TFYL), and 230 to 250 (MLIV…YAFP). Residues 248 to 602 (AFPTLFPKVN…STLLRALYEQ (355 aa)) form a phytoene synthase region.

This sequence in the N-terminal section; belongs to the lycopene beta-cyclase family. In the C-terminal section; belongs to the phytoene/squalene synthase family.

It is found in the membrane. The enzyme catalyses all-trans-lycopene = gamma-carotene. It catalyses the reaction gamma-carotene = all-trans-beta-carotene. The catalysed reaction is 2 (2E,6E,10E)-geranylgeranyl diphosphate = 15-cis-phytoene + 2 diphosphate. Its pathway is carotenoid biosynthesis; beta-carotene biosynthesis. It participates in carotenoid biosynthesis; phytoene biosynthesis; all-trans-phytoene from geranylgeranyl diphosphate: step 1/1. Its function is as follows. Bifunctional enzyme that catalyzes the reactions from geranylgeranyl diphosphate to phytoene (phytoene synthase) and from lycopene to beta-carotene via the intermediate gamma-carotene and from 3,4-didehydrolycopene to torulene (lycopene cyclase). Torulene is further processed to the acidic carotenoid neurosporaxanthin. The cyclase preferentially catalyzes single cyclizations at only one end of the substrate to produce monocyclic carotenoids. Neurosporaxanthin is synthesized from geranyl-geranyl pyrophosphate (GGPP) through several enzymatic activities. Phytoene synthase activity performed by the bifunctional enzyme al-2 first produces phytoene from geranyl-geranyl pyrophosphate (GGPP). The phytoene dehydrogenase al-1 then introduces 5 desaturations to lead to 3,4-didehydrolycopene via the intermediates phytofluene, zeta-carotene, neurosporene and lycopene. Al-2 cyclase activity then converts 3,4-didehydrolycopene into torulene. Al-2 can also convet lycopene into gamma-carotene which in turn is converted to beta-carotene by an additional al-2 cyclization reaction. Torulene is the substrate of the dioxidase cao-2 that breaks the molecule, removing five carbon atoms to yield beta-apo-4'-carotenal, whereas the aldehyde dehydrogenase ylo-1 mediates the last step by converting beta-apo-4'-carotenal into neurosporaxanthin. In Neurospora crassa (strain ATCC 24698 / 74-OR23-1A / CBS 708.71 / DSM 1257 / FGSC 987), this protein is Bifunctional lycopene cyclase/phytoene synthase.